Consider the following 176-residue polypeptide: Peptide deformylase (176 aa).

Fe cation is bound by residues cysteine 94 and histidine 136. Residue glutamate 137 is part of the active site. Residue histidine 140 participates in Fe cation binding.

This sequence belongs to the polypeptide deformylase family. The cofactor is Fe(2+).

It catalyses the reaction N-terminal N-formyl-L-methionyl-[peptide] + H2O = N-terminal L-methionyl-[peptide] + formate. Removes the formyl group from the N-terminal Met of newly synthesized proteins. Requires at least a dipeptide for an efficient rate of reaction. N-terminal L-methionine is a prerequisite for activity but the enzyme has broad specificity at other positions. The protein is Peptide deformylase of Mesorhizobium japonicum (strain LMG 29417 / CECT 9101 / MAFF 303099) (Mesorhizobium loti (strain MAFF 303099)).